A 443-amino-acid polypeptide reads, in one-letter code: ATP-dependent protease ATPase subunit HslU (443 aa).

ATP contacts are provided by residues Ile-18, 60 to 65 (GVGKTE), Asp-256, Glu-321, and Arg-393.

It belongs to the ClpX chaperone family. HslU subfamily. In terms of assembly, a double ring-shaped homohexamer of HslV is capped on each side by a ring-shaped HslU homohexamer. The assembly of the HslU/HslV complex is dependent on binding of ATP.

It is found in the cytoplasm. ATPase subunit of a proteasome-like degradation complex; this subunit has chaperone activity. The binding of ATP and its subsequent hydrolysis by HslU are essential for unfolding of protein substrates subsequently hydrolyzed by HslV. HslU recognizes the N-terminal part of its protein substrates and unfolds these before they are guided to HslV for hydrolysis. The protein is ATP-dependent protease ATPase subunit HslU of Photorhabdus laumondii subsp. laumondii (strain DSM 15139 / CIP 105565 / TT01) (Photorhabdus luminescens subsp. laumondii).